We begin with the raw amino-acid sequence, 467 residues long: Serine/threonine-protein phosphatase 2A 56 kDa regulatory subunit epsilon isoform (467 aa).

The segment at Met-1–Gln-39 is disordered. At Ser-2 the chain carries N-acetylserine. At Thr-7 the chain carries Phosphothreonine. Residues Lys-20–Arg-29 are compositionally biased toward basic residues. Phosphoserine is present on residues Ser-30, Ser-32, and Ser-34. The segment covering Ser-30–Gln-39 has biased composition (low complexity).

Belongs to the phosphatase 2A regulatory subunit B56 family. PP2A consists of a common heterodimeric core enzyme, composed of a 36 kDa catalytic subunit (subunit C) and a 65 kDa constant regulatory subunit (PR65 or subunit A), that associates with a variety of regulatory subunits. Proteins that associate with the core dimer include three families of regulatory subunits B (the R2/B/PR55/B55, R3/B''/PR72/PR130/PR59 and R5/B'/B56 families), the 48 kDa variable regulatory subunit, viral proteins, and cell signaling molecules. Interacts with SGO1. Found in a complex with at least ARL2, PPP2CB; PPP2R1A, PPP2R2A, PPP2R5E and TBCD.

The protein localises to the cytoplasm. Functionally, the B regulatory subunit might modulate substrate selectivity and catalytic activity, and might also direct the localization of the catalytic enzyme to a particular subcellular compartment. Interacts with cyclin G in vitro. In Mus musculus (Mouse), this protein is Serine/threonine-protein phosphatase 2A 56 kDa regulatory subunit epsilon isoform (Ppp2r5e).